The sequence spans 106 residues: Large ribosomal subunit protein uL24 (106 aa).

This sequence belongs to the universal ribosomal protein uL24 family. As to quaternary structure, part of the 50S ribosomal subunit.

In terms of biological role, one of two assembly initiator proteins, it binds directly to the 5'-end of the 23S rRNA, where it nucleates assembly of the 50S subunit. Functionally, one of the proteins that surrounds the polypeptide exit tunnel on the outside of the subunit. The chain is Large ribosomal subunit protein uL24 from Desulforudis audaxviator (strain MP104C).